Here is a 335-residue protein sequence, read N- to C-terminus: Mitochondrial fission regulator 1 (335 aa).

The transit peptide at 1–48 directs the protein to the mitochondrion; sequence MIRWFKCFMRMIFEQVGLNMESVLWSSKPYGSSRSIVRKIGTNLSLIQ. Positions 134-170 form a coiled coil; that stretch reads RSTVIANEEAMQKISALENELATLRAQIAKIVILQEQ. Positions 182–309 are necessary and sufficient to promote mitochondrial fission; it reads ASAAVPCVPP…DKVIPKSETN (128 aa). Positions 219-240 are disordered; the sequence is RKNRKTNSGPIPTENGPKKPEI.

It belongs to the MTFR1 family. In terms of tissue distribution, widely expressed in embryonic tissues with higher expression in cartilage and hypertrophic chondrocytes. Specifically expressed in hypertrophic chondrocytes (at protein level).

Its subcellular location is the mitochondrion. Functionally, may play a role in mitochondrial aerobic respiration. May also regulate mitochondrial organization and fission. This is Mitochondrial fission regulator 1 (MTFR1) from Gallus gallus (Chicken).